A 252-amino-acid chain; its full sequence is Triosephosphate isomerase (252 aa).

Residue 10-12 participates in substrate binding; the sequence is NWK. The Electrophile role is filled by histidine 96. The active-site Proton acceptor is the glutamate 168. Substrate contacts are provided by residues glycine 174, serine 214, and 235-236; that span reads GG.

It belongs to the triosephosphate isomerase family. As to quaternary structure, homodimer.

The protein resides in the cytoplasm. It carries out the reaction D-glyceraldehyde 3-phosphate = dihydroxyacetone phosphate. Its pathway is carbohydrate biosynthesis; gluconeogenesis. It participates in carbohydrate degradation; glycolysis; D-glyceraldehyde 3-phosphate from glycerone phosphate: step 1/1. Its function is as follows. Involved in the gluconeogenesis. Catalyzes stereospecifically the conversion of dihydroxyacetone phosphate (DHAP) to D-glyceraldehyde-3-phosphate (G3P). In Streptococcus thermophilus (strain CNRZ 1066), this protein is Triosephosphate isomerase.